Here is a 103-residue protein sequence, read N- to C-terminus: uncharacterized protein (103 aa).

Residues Met-1–Arg-103 are disordered. Composition is skewed to basic residues over residues Arg-55–Ser-65 and Arg-74–Arg-84.

This sequence belongs to the epstein-barr virus RPMS1 family.

This is an uncharacterized protein from Epstein-Barr virus (strain GD1) (HHV-4).